Reading from the N-terminus, the 74-residue chain is Cytoplasmic envelopment protein 3 (74 aa).

Glycine 2 carries the N-myristoyl glycine; by host lipid modification. The Di-leucine-like internalization motif signature appears at 15 to 16 (LV). Positions 34-40 (SMEEFDI) are asp/Glu-rich (acidic). The disordered stretch occupies residues 36–74 (EEFDIPPPPPLPKPVFKQPGPYKIPARSQRCPSKRRDPY).

It belongs to the herpesviridae cytoplasmic envelopment protein 3 family. As to quaternary structure, interacts with cytoplasmic envelopment protein 2; this interaction is essential for the proper localization of each protein to the assembly complex and thus for the production of infectious virus. Myristoylation and palmitoylation (probably on one or more of the nearby cysteines at the N-terminus) enable membrane-binding and Golgi apparatus-specific targeting and are essential for efficient packaging. Post-translationally, phosphorylated. Phosphorylation does not seem to be required for recycling to the host Golgi apparatus. Packaging is selective for underphosphorylated forms.

It is found in the virion tegument. The protein localises to the virion membrane. It localises to the host cell membrane. The protein resides in the host Golgi apparatus membrane. Plays an important role in the cytoplasmic envelopment of tegument proteins and capsids during the assembly and egress processes. Also participates in viral entry at the fusion step probably by regulating the core fusion machinery. This chain is Cytoplasmic envelopment protein 3, found in Equine herpesvirus 1 (strain Ab4p) (EHV-1).